The following is a 257-amino-acid chain: MTKVIEALSDWQSIRKTINDLSVGFVPTMGNLHAGHLSLLERSKCENTITVLSLFINPTQFNDKNDFKNYPRTLAQDIAMAEENGIDYVLAPTDDALYPDQYAYKITNSTINNQEAEFRPRHFDGVLTVVMKLLLLVKPTRAYFGEKDYQQLQLVKGLAEAFFLDTEIIGCKIVRNEFGLPLSSRNRRLTEDQYQLAQRFSEIFHSDLSCDEIKNALIQEGIIVDYIEDYNERRFAAVHVGDIRLIDNIPFAKDKKC.

Residue 29 to 36 participates in ATP binding; the sequence is MGNLHAGH. The Proton donor role is filled by His-36. Gln-60 serves as a coordination point for (R)-pantoate. Gln-60 is a beta-alanine binding site. 145-148 contacts ATP; that stretch reads GEKD. Residue Gln-151 coordinates (R)-pantoate. ATP is bound by residues Val-174 and 182-185; that span reads LSSR.

This sequence belongs to the pantothenate synthetase family. As to quaternary structure, homodimer.

It is found in the cytoplasm. It catalyses the reaction (R)-pantoate + beta-alanine + ATP = (R)-pantothenate + AMP + diphosphate + H(+). It participates in cofactor biosynthesis; (R)-pantothenate biosynthesis; (R)-pantothenate from (R)-pantoate and beta-alanine: step 1/1. Its function is as follows. Catalyzes the condensation of pantoate with beta-alanine in an ATP-dependent reaction via a pantoyl-adenylate intermediate. This Coxiella burnetii (strain CbuK_Q154) (Coxiella burnetii (strain Q154)) protein is Pantothenate synthetase.